The primary structure comprises 171 residues: Large ribosomal subunit protein uL10 (171 aa).

Belongs to the universal ribosomal protein uL10 family. In terms of assembly, part of the ribosomal stalk of the 50S ribosomal subunit. The N-terminus interacts with L11 and the large rRNA to form the base of the stalk. The C-terminus forms an elongated spine to which L12 dimers bind in a sequential fashion forming a multimeric L10(L12)X complex.

Functionally, forms part of the ribosomal stalk, playing a central role in the interaction of the ribosome with GTP-bound translation factors. In Methylocella silvestris (strain DSM 15510 / CIP 108128 / LMG 27833 / NCIMB 13906 / BL2), this protein is Large ribosomal subunit protein uL10.